Reading from the N-terminus, the 339-residue chain is UDP-N-acetylglucosamine--N-acetylmuramyl-(pentapeptide) pyrophosphoryl-undecaprenol N-acetylglucosamine transferase (339 aa).

UDP-N-acetyl-alpha-D-glucosamine is bound by residues threonine 9–glycine 11, asparagine 119, arginine 160, serine 188, and glutamine 280.

This sequence belongs to the glycosyltransferase 28 family. MurG subfamily.

It localises to the cell inner membrane. The enzyme catalyses di-trans,octa-cis-undecaprenyl diphospho-N-acetyl-alpha-D-muramoyl-L-alanyl-D-glutamyl-meso-2,6-diaminopimeloyl-D-alanyl-D-alanine + UDP-N-acetyl-alpha-D-glucosamine = di-trans,octa-cis-undecaprenyl diphospho-[N-acetyl-alpha-D-glucosaminyl-(1-&gt;4)]-N-acetyl-alpha-D-muramoyl-L-alanyl-D-glutamyl-meso-2,6-diaminopimeloyl-D-alanyl-D-alanine + UDP + H(+). Its pathway is cell wall biogenesis; peptidoglycan biosynthesis. Cell wall formation. Catalyzes the transfer of a GlcNAc subunit on undecaprenyl-pyrophosphoryl-MurNAc-pentapeptide (lipid intermediate I) to form undecaprenyl-pyrophosphoryl-MurNAc-(pentapeptide)GlcNAc (lipid intermediate II). The sequence is that of UDP-N-acetylglucosamine--N-acetylmuramyl-(pentapeptide) pyrophosphoryl-undecaprenol N-acetylglucosamine transferase from Thermus thermophilus (strain ATCC BAA-163 / DSM 7039 / HB27).